The sequence spans 676 residues: Methionine--tRNA ligase (676 aa).

A 'HIGH' region motif is present at residues 11 to 21 (PYANGPCHLGH). Residues cysteine 143, cysteine 146, cysteine 156, and cysteine 159 each contribute to the Zn(2+) site. The 'KMSKS' region signature appears at 326 to 330 (KMSTS). Threonine 329 lines the ATP pocket. A tRNA-binding domain is found at 581–676 (EFGKVKLVVG…TEGNVGEYIK (96 aa)).

This sequence belongs to the class-I aminoacyl-tRNA synthetase family. MetG type 1 subfamily. In terms of assembly, homodimer. Requires Zn(2+) as cofactor.

The protein localises to the cytoplasm. It carries out the reaction tRNA(Met) + L-methionine + ATP = L-methionyl-tRNA(Met) + AMP + diphosphate. In terms of biological role, is required not only for elongation of protein synthesis but also for the initiation of all mRNA translation through initiator tRNA(fMet) aminoacylation. This chain is Methionine--tRNA ligase, found in Methanosphaera stadtmanae (strain ATCC 43021 / DSM 3091 / JCM 11832 / MCB-3).